Consider the following 248-residue polypeptide: Type III pantothenate kinase (248 aa).

An ATP-binding site is contributed by 6 to 13 (DCGNSFIK). Substrate is bound by residues tyrosine 92 and 99-102 (GLDR). Aspartate 101 acts as the Proton acceptor in catalysis. Residue aspartate 121 participates in K(+) binding. Threonine 124 contacts ATP. Residue threonine 180 coordinates substrate.

The protein belongs to the type III pantothenate kinase family. As to quaternary structure, homodimer. It depends on NH4(+) as a cofactor. The cofactor is K(+).

The protein resides in the cytoplasm. The enzyme catalyses (R)-pantothenate + ATP = (R)-4'-phosphopantothenate + ADP + H(+). The protein operates within cofactor biosynthesis; coenzyme A biosynthesis; CoA from (R)-pantothenate: step 1/5. Its function is as follows. Catalyzes the phosphorylation of pantothenate (Pan), the first step in CoA biosynthesis. This chain is Type III pantothenate kinase, found in Ectopseudomonas mendocina (strain ymp) (Pseudomonas mendocina).